The following is a 579-amino-acid chain: Proline--tRNA ligase (579 aa).

This sequence belongs to the class-II aminoacyl-tRNA synthetase family. ProS type 1 subfamily. As to quaternary structure, homodimer.

The protein resides in the cytoplasm. It carries out the reaction tRNA(Pro) + L-proline + ATP = L-prolyl-tRNA(Pro) + AMP + diphosphate. In terms of biological role, catalyzes the attachment of proline to tRNA(Pro) in a two-step reaction: proline is first activated by ATP to form Pro-AMP and then transferred to the acceptor end of tRNA(Pro). As ProRS can inadvertently accommodate and process non-cognate amino acids such as alanine and cysteine, to avoid such errors it has two additional distinct editing activities against alanine. One activity is designated as 'pretransfer' editing and involves the tRNA(Pro)-independent hydrolysis of activated Ala-AMP. The other activity is designated 'posttransfer' editing and involves deacylation of mischarged Ala-tRNA(Pro). The misacylated Cys-tRNA(Pro) is not edited by ProRS. The protein is Proline--tRNA ligase of Chlamydia muridarum (strain MoPn / Nigg).